The primary structure comprises 235 residues: Segregation and condensation protein A (235 aa).

The protein belongs to the ScpA family. In terms of assembly, component of a cohesin-like complex composed of ScpA, ScpB and the Smc homodimer, in which ScpA and ScpB bind to the head domain of Smc. The presence of the three proteins is required for the association of the complex with DNA.

Its subcellular location is the cytoplasm. In terms of biological role, participates in chromosomal partition during cell division. May act via the formation of a condensin-like complex containing Smc and ScpB that pull DNA away from mid-cell into both cell halves. The protein is Segregation and condensation protein A of Streptococcus uberis (strain ATCC BAA-854 / 0140J).